The following is a 184-amino-acid chain: Peptide deformylase (184 aa).

Residues Cys98 and His140 each contribute to the Fe cation site. Residue Glu141 is part of the active site. His144 contributes to the Fe cation binding site.

This sequence belongs to the polypeptide deformylase family. Fe(2+) is required as a cofactor.

The enzyme catalyses N-terminal N-formyl-L-methionyl-[peptide] + H2O = N-terminal L-methionyl-[peptide] + formate. Removes the formyl group from the N-terminal Met of newly synthesized proteins. Requires at least a dipeptide for an efficient rate of reaction. N-terminal L-methionine is a prerequisite for activity but the enzyme has broad specificity at other positions. The polypeptide is Peptide deformylase (Bacteroides thetaiotaomicron (strain ATCC 29148 / DSM 2079 / JCM 5827 / CCUG 10774 / NCTC 10582 / VPI-5482 / E50)).